The chain runs to 413 residues: D-nopaline dehydrogenase (413 aa).

Belongs to the lysopine/nopaline/octopine/opine/vitopine dehydrogenases family. Homotetramer.

It catalyses the reaction D-nopaline + NADP(+) + H2O = L-arginine + 2-oxoglutarate + NADPH + H(+). The sequence is that of D-nopaline dehydrogenase (nos) from Agrobacterium tumefaciens (strain T37).